A 466-amino-acid polypeptide reads, in one-letter code: Benzoate transport protein (466 aa).

Over 1-22 (MSREINVNQMIDDSKLTPFHWR) the chain is Cytoplasmic. Residues 23–43 (VIILSTLIIIFDGYDLVIYGV) form a helical membrane-spanning segment. Residues 44–60 (ALPLLMKEWAIDPVTAG) lie on the Periplasmic side of the membrane. A helical membrane pass occupies residues 61–81 (FIGSIALFGMMFGALIFGTIA). The Cytoplasmic portion of the chain corresponds to 82 to 93 (DKLEHLGVSRKK). A helical transmembrane segment spans residues 94–114 (VIAVCIILFSLCTVLCGFSET). The Periplasmic portion of the chain corresponds to 115–119 (TTQFS). The helical transmembrane segment at 120–140 (IFRFLAGVGIGGVMPNVIALV) threads the bilayer. Over 141-150 (SEYAPKKFKS) the chain is Cytoplasmic. A helical membrane pass occupies residues 151 to 171 (FFVTLMFSGYAIGGMTAAFLG). Residues 172–181 (SILVPLYGWK) lie on the Periplasmic side of the membrane. Residues 182–202 (IMFMIAGIPLVLLLPLMKVLP) form a helical membrane-spanning segment. The Cytoplasmic portion of the chain corresponds to 203-258 (ESIDYLVRKKKDETVRFIMTKMVPSYQYQPDHVFVLNSSNQNQAQAPVKMIFQEQR). A helical transmembrane segment spans residues 259–279 (AFSTMMFWCSIFMTLIMVYAL). The Periplasmic portion of the chain corresponds to 280 to 297 (GNWLPKLMIEAGYNLSKS). The chain crosses the membrane as a helical span at residues 298–318 (LIFLFSLNVGGMIGSILGGYL). Topologically, residues 319–325 (ADRYNVK) are cytoplasmic. A helical membrane pass occupies residues 326–346 (FVTMGLLLLGAISLSLLSFQF). Residues 347 to 348 (SS) are Periplasmic-facing. The chain crosses the membrane as a helical span at residues 349–369 (VILYILIACAGAASIGAQIML). The Cytoplasmic segment spans residues 370–387 (LAYMAKFYAPNVRSTGIG). A helical membrane pass occupies residues 388-408 (WGLGMGRVGAILGPILTGWLL). At 409–414 (SLQLPH) the chain is on the periplasmic side. Residues 415–435 (FYNFLALSIPAVLGIVTVFLI) traverse the membrane as a helical segment. Residues 436–466 (NDRRMYQPEPISPIANQNDTTTVKVNEAVSH) lie on the Cytoplasmic side of the membrane.

It belongs to the major facilitator superfamily. Aromatic acid:H(+) symporter (AAHS) (TC 2.A.1.15) family.

It localises to the cell inner membrane. Functionally, probable uptake of benzoate. This Acinetobacter baylyi (strain ATCC 33305 / BD413 / ADP1) protein is Benzoate transport protein (benK).